The following is a 383-amino-acid chain: Queuine tRNA-ribosyltransferase (383 aa).

Asp92 (proton acceptor) is an active-site residue. Substrate-binding positions include 92 to 96 (DSGGF), Asp146, Gln190, and Gly217. The interval 248-254 (GVGKPED) is RNA binding. Asp267 (nucleophile) is an active-site residue. Residues 272 to 276 (TRNAR) form an RNA binding; important for wobble base 34 recognition region. Positions 310, 312, 315, and 341 each coordinate Zn(2+).

The protein belongs to the queuine tRNA-ribosyltransferase family. In terms of assembly, homodimer. Within each dimer, one monomer is responsible for RNA recognition and catalysis, while the other monomer binds to the replacement base PreQ1. It depends on Zn(2+) as a cofactor.

It carries out the reaction 7-aminomethyl-7-carbaguanine + guanosine(34) in tRNA = 7-aminomethyl-7-carbaguanosine(34) in tRNA + guanine. Its pathway is tRNA modification; tRNA-queuosine biosynthesis. In terms of biological role, catalyzes the base-exchange of a guanine (G) residue with the queuine precursor 7-aminomethyl-7-deazaguanine (PreQ1) at position 34 (anticodon wobble position) in tRNAs with GU(N) anticodons (tRNA-Asp, -Asn, -His and -Tyr). Catalysis occurs through a double-displacement mechanism. The nucleophile active site attacks the C1' of nucleotide 34 to detach the guanine base from the RNA, forming a covalent enzyme-RNA intermediate. The proton acceptor active site deprotonates the incoming PreQ1, allowing a nucleophilic attack on the C1' of the ribose to form the product. After dissociation, two additional enzymatic reactions on the tRNA convert PreQ1 to queuine (Q), resulting in the hypermodified nucleoside queuosine (7-(((4,5-cis-dihydroxy-2-cyclopenten-1-yl)amino)methyl)-7-deazaguanosine). The protein is Queuine tRNA-ribosyltransferase of Psychrobacter sp. (strain PRwf-1).